The chain runs to 881 residues: Ent-kaurene synthase CPS/KS, chloroplastic (881 aa).

The transit peptide at 1–41 (MASSTLIQNRSCGVTSSMSSFQIFRGQPLRFPGTRTPAAVQ) directs the protein to the chloroplast. Mg(2+) is bound by residues Asp-417, Asp-419, Asp-635, Asp-639, Asn-778, Asp-779, and Glu-786. Residues 417 to 422 (DVDDTA) carry the DXDDTA motif motif. Positions 635 to 639 (DDYFD) match the DDXXD motif motif.

Belongs to the terpene synthase family. Mg(2+) serves as cofactor.

Its subcellular location is the plastid. The protein resides in the chloroplast. It catalyses the reaction (2E,6E,10E)-geranylgeranyl diphosphate = ent-copalyl diphosphate. It carries out the reaction ent-copalyl diphosphate = ent-kaur-16-ene + diphosphate. The catalysed reaction is ent-copalyl diphosphate = ent-beyerene + diphosphate. The enzyme catalyses ent-copalyl diphosphate = ent-sandaracopimara-8(14),15-diene + diphosphate. It catalyses the reaction ent-copalyl diphosphate = ent-isokaurene + diphosphate. It carries out the reaction ent-copalyl diphosphate + H2O = 16alpha-hydroxy-ent-kaurene + diphosphate. The protein operates within secondary metabolite biosynthesis; terpenoid biosynthesis. Bifunctional copalyl diphosphate/kaurene synthase involved in the biosynthesis of labdane-related diterpenoids (LRDs) natural products such as ent-beyerene, an antimicrobial compound. Supports the conversion of geranylgeranyl diphosphate (GGPP) to ent-copalyl diphosphate (ent-CDP). Also catalyzes the subsequent cyclization of ent-CDP into many diterpenes, including ent-kaur-16-ene as the major product, and ent-beyerene, ent-sandaracopimaradiene, ent-kaur-15-ene (ent-isokaurene) and 16-hydroxy-ent-kaurene (ent-16-alpha-hydroxy-kaurene) as minor products. This is Ent-kaurene synthase CPS/KS, chloroplastic from Physcomitrium patens (Spreading-leaved earth moss).